A 631-amino-acid polypeptide reads, in one-letter code: Methanol dehydrogenase [cytochrome c] subunit 1 (631 aa).

Positions 1-32 (MNRNTPKARGASSLAMAVAMGLAVLTTAPATA) are cleaved as a signal peptide. C135 and C136 are oxidised to a cystine. E209 and N293 together coordinate Ca(2+). D335 serves as the catalytic Proton acceptor. Cysteines 418 and 447 form a disulfide.

It belongs to the bacterial PQQ dehydrogenase family. As to quaternary structure, heterotetramer composed of 2 alpha and 2 beta subunits. Pyrroloquinoline quinone is required as a cofactor. The cofactor is Ca(2+).

The protein resides in the periplasm. The catalysed reaction is 2 Fe(III)-[cytochrome cL] + a primary alcohol = 2 Fe(II)-[cytochrome cL] + an aldehyde + 2 H(+). Catalyzes the oxidation of primary alcohols including methanol. In Paracoccus denitrificans, this protein is Methanol dehydrogenase [cytochrome c] subunit 1 (moxF).